Consider the following 59-residue polypeptide: Large ribosomal subunit protein bL32 (59 aa).

The disordered stretch occupies residues 1 to 59 (MAVQQNKKSPSKRGMHRSHDFLTNPPLAVEPTSGEIHLRHHVSPNGYYRGRKVLPAKGE). Basic residues predominate over residues 49 to 59 (RGRKVLPAKGE).

Belongs to the bacterial ribosomal protein bL32 family.

This is Large ribosomal subunit protein bL32 from Methylobacillus flagellatus (strain ATCC 51484 / DSM 6875 / VKM B-1610 / KT).